The following is a 440-amino-acid chain: MKQTPDQFSVSHLLSAVESEISAGSEKGDPTERDLKVTLGEKPLWEKFKSLTNEMIVTKSGRRMFPVLKVNVSGLDPNAMYSFLLDFTAADNHRWKYVNGEWVPGGKPEPSVPSCVYIHPDSPNFGAHWMKSPVSFSKVKLTNKLNGGGQQIMLNSLHKYEPRIHIVKVGGPDNQRTLSTHTFAETQFIAVTAYQNEELTALKIKHNPFAKAFLDAKERNDTKSGHDDLTDQQPQFSQLGGWFLPGTGPICPPPNPHQFAPSLGLPSHGCDRYSTLRNHRSAPYPHPYQRSSPPTNYGHDTAASLPMMPTHDNWSGLPVSTHNMLSMSAMPHTTTSTHAQYPNLWSVSNNNLTPTTHAQTHMSGTMGTGLPHQFLRTTAPAPYHSIPTCTVPTTASSSPVYHDSHEVSSTDSGYGHSTTPPAPQTRITSNNWSPMTMPSM.

The T-box DNA-binding region spans 44–215; the sequence is LWEKFKSLTN…HNPFAKAFLD (172 aa). Disordered regions lie at residues 282 to 303 and 393 to 440; these read APYPHPYQRSSPPTNYGHDTAA and TTAS…MPSM. Residues 409 to 440 are compositionally biased toward polar residues; it reads STDSGYGHSTTPPAPQTRITSNNWSPMTMPSM.

In terms of tissue distribution, mesoderm and notochord.

The protein resides in the nucleus. Functionally, involved in the transcriptional regulation of genes required for mesoderm formation and differentiation. This is T-box transcription factor T homolog 2 from Branchiostoma floridae (Florida lancelet).